A 256-amino-acid polypeptide reads, in one-letter code: Leucyl/phenylalanyl-tRNA--protein transferase (256 aa).

The segment at 1–21 (MIPWLPDDSDSAPFPPTRLAL) is disordered.

It belongs to the L/F-transferase family.

Its subcellular location is the cytoplasm. The enzyme catalyses N-terminal L-lysyl-[protein] + L-leucyl-tRNA(Leu) = N-terminal L-leucyl-L-lysyl-[protein] + tRNA(Leu) + H(+). The catalysed reaction is N-terminal L-arginyl-[protein] + L-leucyl-tRNA(Leu) = N-terminal L-leucyl-L-arginyl-[protein] + tRNA(Leu) + H(+). It carries out the reaction L-phenylalanyl-tRNA(Phe) + an N-terminal L-alpha-aminoacyl-[protein] = an N-terminal L-phenylalanyl-L-alpha-aminoacyl-[protein] + tRNA(Phe). Functions in the N-end rule pathway of protein degradation where it conjugates Leu, Phe and, less efficiently, Met from aminoacyl-tRNAs to the N-termini of proteins containing an N-terminal arginine or lysine. The protein is Leucyl/phenylalanyl-tRNA--protein transferase of Leptothrix cholodnii (strain ATCC 51168 / LMG 8142 / SP-6) (Leptothrix discophora (strain SP-6)).